Consider the following 538-residue polypeptide: Thiamine transport system permease protein ThiP (538 aa).

The next 12 membrane-spanning stretches (helical) occupy residues 19 to 39 (VVVISFIILFYGGALSSIFAL), 57 to 77 (LILFSFGQALLSTVLSIFFGL), 97 to 117 (LMSLTFVLPALVVIFGLIGIY), 141 to 161 (LSGILIAHLFFNIPLAAQLFL), 202 to 222 (FSLIFMLCFTSFTVVLTLGGG), 242 to 262 (LPKAALFAMLQFVFCLILFSL), 293 to 313 (ILVLLVFVFFLFSPVLNILIS), 337 to 357 (LSIAPLSALLALTMAIALLLL), 376 to 396 (AGMVILAIPILVLAMGLFLLL), 406 to 426 (LFIIVVFCNALSAMPFVLRIL), 466 to 486 (YAFALGLALSLGDFTAIALFG), and 509 to 529 (AAVTAGILLLLCGILFAFIHT). Residues 58–263 (ILFSFGQALL…VFCLILFSLT (206 aa)) form the ABC transmembrane type-1 1 domain. One can recognise an ABC transmembrane type-1 2 domain in the interval 333 to 528 (LGYSLSIAPL…LCGILFAFIH (196 aa)).

It belongs to the binding-protein-dependent transport system permease family. CysTW subfamily. The complex is composed of two ATP-binding proteins (ThiQ), two transmembrane proteins (ThiP) and a solute-binding protein (ThiB).

The protein resides in the cell inner membrane. Functionally, part of the ABC transporter complex ThiBPQ involved in thiamine import. Probably responsible for the translocation of the substrate across the membrane. This is Thiamine transport system permease protein ThiP (thiP) from Haemophilus influenzae (strain ATCC 51907 / DSM 11121 / KW20 / Rd).